The chain runs to 119 residues: Holo-[acyl-carrier-protein] synthase (119 aa).

Mg(2+)-binding residues include D8 and E58.

It belongs to the P-Pant transferase superfamily. AcpS family. Mg(2+) serves as cofactor.

It is found in the cytoplasm. The catalysed reaction is apo-[ACP] + CoA = holo-[ACP] + adenosine 3',5'-bisphosphate + H(+). Transfers the 4'-phosphopantetheine moiety from coenzyme A to a Ser of acyl-carrier-protein. The polypeptide is Holo-[acyl-carrier-protein] synthase (Halalkalibacterium halodurans (strain ATCC BAA-125 / DSM 18197 / FERM 7344 / JCM 9153 / C-125) (Bacillus halodurans)).